Reading from the N-terminus, the 318-residue chain is Putative 2-hydroxyacid dehydrogenase SH0752 (318 aa).

NAD(+)-binding positions include 155 to 156 (EI), 234 to 236 (AGR), and D260. R236 is an active-site residue. E265 is a catalytic residue. The Proton donor role is filled by H283. 283-286 (HIGN) contributes to the NAD(+) binding site.

Belongs to the D-isomer specific 2-hydroxyacid dehydrogenase family.

The protein is Putative 2-hydroxyacid dehydrogenase SH0752 of Staphylococcus haemolyticus (strain JCSC1435).